The primary structure comprises 436 residues: Adenylosuccinate synthetase (436 aa).

Residues 22–28 (GDEGKGK) and 50–52 (GHE) each bind GTP. Asp-23 (proton acceptor) is an active-site residue. The Mg(2+) site is built by Asp-23 and Gly-50. IMP is bound by residues 23 to 26 (DEGK), 48 to 51 (NAGH), Thr-141, Arg-155, Asn-231, Thr-246, and Arg-310. His-51 functions as the Proton donor in the catalytic mechanism. 306-312 (VSTARVR) is a binding site for substrate. GTP is bound by residues Arg-312, 338 to 340 (KMD), and 424 to 426 (GVG).

This sequence belongs to the adenylosuccinate synthetase family. In terms of assembly, homodimer. It depends on Mg(2+) as a cofactor.

The protein localises to the cytoplasm. The catalysed reaction is IMP + L-aspartate + GTP = N(6)-(1,2-dicarboxyethyl)-AMP + GDP + phosphate + 2 H(+). It functions in the pathway purine metabolism; AMP biosynthesis via de novo pathway; AMP from IMP: step 1/2. In terms of biological role, plays an important role in the salvage pathway for purine nucleotide biosynthesis. Catalyzes the first committed step in the biosynthesis of AMP from IMP. This is Adenylosuccinate synthetase from Babesia bovis.